Reading from the N-terminus, the 86-residue chain is Cytochrome c oxidase subunit 6B1 (86 aa).

The residue at position 2 (alanine 2) is an N-acetylalanine. The region spanning threonine 27–tryptophan 73 is the CHCH domain. The short motif at cysteine 30–cysteine 40 is the Cx9C motif element. 2 disulfide bridges follow: cysteine 30–cysteine 65 and cysteine 40–cysteine 54. Positions cysteine 54–cysteine 65 match the Cx10C motif motif. N6-acetyllysine is present on lysine 62.

This sequence belongs to the cytochrome c oxidase subunit 6B family. In terms of assembly, component of the cytochrome c oxidase (complex IV, CIV), a multisubunit enzyme composed of 14 subunits. The complex is composed of a catalytic core of 3 subunits MT-CO1, MT-CO2 and MT-CO3, encoded in the mitochondrial DNA, and 11 supernumerary subunits COX4I1 (or COX4I2), COX5A, COX5B, COX6A2 (or COX6A1), COX6B1 (or COX6B2), COX6C, COX7A1 (or COX7A2), COX7B, COX7C, COX8B and NDUFA4, which are encoded in the nuclear genome. The complex exists as a monomer or a dimer and forms supercomplexes (SCs) in the inner mitochondrial membrane with NADH-ubiquinone oxidoreductase (complex I, CI) and ubiquinol-cytochrome c oxidoreductase (cytochrome b-c1 complex, complex III, CIII), resulting in different assemblies (supercomplex SCI(1)III(2)IV(1) and megacomplex MCI(2)III(2)IV(2)).

The protein resides in the mitochondrion inner membrane. It functions in the pathway energy metabolism; oxidative phosphorylation. Its function is as follows. Component of the cytochrome c oxidase, the last enzyme in the mitochondrial electron transport chain which drives oxidative phosphorylation. The respiratory chain contains 3 multisubunit complexes succinate dehydrogenase (complex II, CII), ubiquinol-cytochrome c oxidoreductase (cytochrome b-c1 complex, complex III, CIII) and cytochrome c oxidase (complex IV, CIV), that cooperate to transfer electrons derived from NADH and succinate to molecular oxygen, creating an electrochemical gradient over the inner membrane that drives transmembrane transport and the ATP synthase. Cytochrome c oxidase is the component of the respiratory chain that catalyzes the reduction of oxygen to water. Electrons originating from reduced cytochrome c in the intermembrane space (IMS) are transferred via the dinuclear copper A center (CU(A)) of subunit 2 and heme A of subunit 1 to the active site in subunit 1, a binuclear center (BNC) formed by heme A3 and copper B (CU(B)). The BNC reduces molecular oxygen to 2 water molecules using 4 electrons from cytochrome c in the IMS and 4 protons from the mitochondrial matrix. The sequence is that of Cytochrome c oxidase subunit 6B1 (COX6B1) from Bos taurus (Bovine).